Consider the following 424-residue polypeptide: Mitogen-activated protein kinase 9 (424 aa).

A Protein kinase domain is found at 26 to 321 (YQQLKPIGSG…VDEALRHPYI (296 aa)). ATP contacts are provided by residues 32–40 (IGSGAQGIV) and K55. D151 serves as the catalytic Proton acceptor. T183 carries the post-translational modification Phosphothreonine; by MAP2K7. The TXY motif lies at 183–185 (TPY). The residue at position 185 (Y185) is a Phosphotyrosine; by MAP2K4. Positions 368 to 424 (KNGVVKDQPSDAAVSSNATPSQSSSINDISSMSTEQTLASDTDSSLDASTGPLEGCR) are disordered. Residues 388 to 417 (SQSSSINDISSMSTEQTLASDTDSSLDAST) are compositionally biased toward low complexity.

It belongs to the protein kinase superfamily. CMGC Ser/Thr protein kinase family. MAP kinase subfamily. Interacts with MECOM. Interacts with DCLK2. Binds to at least four scaffolding proteins, MAPK8IP1/JIP-1, MAPK8IP2/JIP-2, MAPK8IP3/JIP-3/JSAP1 and SPAG9/MAPK8IP4/JIP-4. These proteins also bind other components of the JNK signaling pathway. Interacts with NFATC4. Interacts with ATF7; the interaction does not phosphorylate ATF7 but acts as a docking site for ATF7-associated partners such as JUN. Interacts with BCL10. Interacts with CTNNB1 and GSK3B. Interacts with MAPKBP1. Interacts with POU5F1; phosphorylates POU5F1 at 'Ser-355'. Found in a complex with SH3RF1, RAC2, MAP3K7/TAK1, MAP2K7/MKK7, MAPK8IP1/JIP1 and MAPK8/JNK1. Mg(2+) is required as a cofactor. Post-translationally, dually phosphorylated on Thr-183 and Tyr-185 by MAP2K7 and MAP2K4, which activates the enzyme. Autophosphorylated in vitro.

Its subcellular location is the cytoplasm. The protein resides in the nucleus. It carries out the reaction L-seryl-[protein] + ATP = O-phospho-L-seryl-[protein] + ADP + H(+). The enzyme catalyses L-threonyl-[protein] + ATP = O-phospho-L-threonyl-[protein] + ADP + H(+). Activated by threonine and tyrosine phosphorylation by either of two dual specificity kinases, MAP2K4 and MAP2K7. MAP2K4 shows a strong preference for Tyr-185 while MAP2K7 phosphorylates Tyr-183 preferentially. Inhibited by dual specificity phosphatases, such as DUSP1. Its function is as follows. Serine/threonine-protein kinase involved in various processes such as cell proliferation, differentiation, migration, transformation and programmed cell death. Extracellular stimuli such as pro-inflammatory cytokines or physical stress stimulate the stress-activated protein kinase/c-Jun N-terminal kinase (SAP/JNK) signaling pathway. In this cascade, two dual specificity kinases MAP2K4/MKK4 and MAP2K7/MKK7 phosphorylate and activate MAPK9/JNK2. In turn, MAPK9/JNK2 phosphorylates a number of transcription factors, primarily components of AP-1 such as JUN and ATF2 and thus regulates AP-1 transcriptional activity. In response to oxidative or ribotoxic stresses, inhibits rRNA synthesis by phosphorylating and inactivating the RNA polymerase 1-specific transcription initiation factor RRN3. Promotes stressed cell apoptosis by phosphorylating key regulatory factors including TP53 and YAP1. In T-cells, MAPK8 and MAPK9 are required for polarized differentiation of T-helper cells into Th1 cells. Upon T-cell receptor (TCR) stimulation, is activated by CARMA1, BCL10, MAP2K7 and MAP3K7/TAK1 to regulate JUN protein levels. Plays an important role in the osmotic stress-induced epithelial tight-junctions disruption. When activated, promotes beta-catenin/CTNNB1 degradation and inhibits the canonical Wnt signaling pathway. Also participates in neurite growth in spiral ganglion neurons. Phosphorylates the CLOCK-BMAL1 heterodimer and plays a role in the regulation of the circadian clock. Phosphorylates POU5F1, which results in the inhibition of POU5F1's transcriptional activity and enhances its proteasomal degradation. Phosphorylates ALKBH5 in response to reactive oxygen species (ROS), promoting ALKBH5 sumoylation and inactivation. Functionally, MAPK9 isoforms display different binding patterns: alpha-1 and alpha-2 preferentially bind to JUN, whereas beta-1 and beta-2 bind to ATF2. However, there is no correlation between binding and phosphorylation, which is achieved at about the same efficiency by all isoforms. JUNB is not a substrate for JNK2 alpha-2, and JUND binds only weakly to it. The sequence is that of Mitogen-activated protein kinase 9 (MAPK9) from Homo sapiens (Human).